The following is a 580-amino-acid chain: Putative ankyrin repeat protein L63 (580 aa).

ANK repeat units lie at residues Ser81 to Ile110, Asp111 to Ala140, Asn141 to Ala170, Asn172 to Ala200, Asp202 to Lys230, Ser314 to Ala339, Ser340 to Cys369, Gly370 to Ser399, Gly400 to Ala429, Asn431 to Ala459, Asp461 to Ala489, Gly490 to Ala519, Asp521 to Ala549, and Asn551 to Pro579.

This chain is Putative ankyrin repeat protein L63, found in Acanthamoeba polyphaga (Amoeba).